The following is a 116-amino-acid chain: Staphylococcal complement inhibitor (116 aa).

The first 31 residues, 1–31 (MKIRKSILAGTLAIVLASPLVTNLDKNEAQA), serve as a signal peptide directing secretion. The tract at residues 62–79 (LATGSLNTYYKRTIKISG) is essential for activity.

The protein belongs to the SCIN family.

The protein resides in the secreted. In terms of biological role, involved in countering the first line of host defense mechanisms. Efficiently inhibits opsonization, phagocytosis and killing of S.aureus by human neutrophils. Acts by binding and stabilizing human C3 convertases (C4b2a and C3bBb), leading to their inactivation. The convertases are no longer able to cleave complement C3, therefore preventing further C3b deposition on the bacterial surface and phagocytosis of the bacterium. Also prevents C5a-induced neutrophil responses. This Staphylococcus aureus (strain N315) protein is Staphylococcal complement inhibitor (scn).